Here is a 275-residue protein sequence, read N- to C-terminus: Dermonecrotic toxin SpaSicTox-betaIIA1 (275 aa).

His5 is a catalytic residue. Mg(2+) contacts are provided by Glu25 and Asp27. The Nucleophile role is filled by His41. Cystine bridges form between Cys45-Cys51 and Cys47-Cys190. Asp85 is a binding site for Mg(2+).

The protein belongs to the arthropod phospholipase D family. Class II subfamily. Requires Mg(2+) as cofactor. In terms of tissue distribution, expressed by the venom gland.

The protein resides in the secreted. The catalysed reaction is an N-(acyl)-sphingosylphosphocholine = an N-(acyl)-sphingosyl-1,3-cyclic phosphate + choline. It catalyses the reaction an N-(acyl)-sphingosylphosphoethanolamine = an N-(acyl)-sphingosyl-1,3-cyclic phosphate + ethanolamine. The enzyme catalyses a 1-acyl-sn-glycero-3-phosphocholine = a 1-acyl-sn-glycero-2,3-cyclic phosphate + choline. It carries out the reaction a 1-acyl-sn-glycero-3-phosphoethanolamine = a 1-acyl-sn-glycero-2,3-cyclic phosphate + ethanolamine. Dermonecrotic toxins cleave the phosphodiester linkage between the phosphate and headgroup of certain phospholipids (sphingolipid and lysolipid substrates), forming an alcohol (often choline) and a cyclic phosphate. This toxin acts on sphingomyelin (SM). It may also act on ceramide phosphoethanolamine (CPE), lysophosphatidylcholine (LPC) and lysophosphatidylethanolamine (LPE), but not on lysophosphatidylserine (LPS), and lysophosphatidylglycerol (LPG). It acts by transphosphatidylation, releasing exclusively cyclic phosphate products as second products. Induces dermonecrosis, hemolysis, increased vascular permeability, edema, inflammatory response, and platelet aggregation. The chain is Dermonecrotic toxin SpaSicTox-betaIIA1 from Sicarius patagonicus (Six-eyed sand spider).